The following is a 261-amino-acid chain: Acetylglutamate kinase (261 aa).

Substrate contacts are provided by residues 45-46 (GG), R67, and N162.

It belongs to the acetylglutamate kinase family. ArgB subfamily.

The protein resides in the cytoplasm. The catalysed reaction is N-acetyl-L-glutamate + ATP = N-acetyl-L-glutamyl 5-phosphate + ADP. The protein operates within amino-acid biosynthesis; L-arginine biosynthesis; N(2)-acetyl-L-ornithine from L-glutamate: step 2/4. Catalyzes the ATP-dependent phosphorylation of N-acetyl-L-glutamate. This chain is Acetylglutamate kinase, found in Bacteroides fragilis (strain ATCC 25285 / DSM 2151 / CCUG 4856 / JCM 11019 / LMG 10263 / NCTC 9343 / Onslow / VPI 2553 / EN-2).